The sequence spans 484 residues: Monocarboxylate transporter 2 (484 aa).

The Cytoplasmic portion of the chain corresponds to 1-16 (MPAPTAVPPPHPLPPD). The chain crosses the membrane as a helical span at residues 17–37 (GGWGWVVVGASFISIGFSYAF). Topologically, residues 38–60 (PKSVTVFFKDIQEIFRAGHSKVA) are extracellular. The chain crosses the membrane as a helical span at residues 61-81 (WISSIMLAVMYAGGPISSVLV). Residues 82-87 (NKYGSR) lie on the Cytoplasmic side of the membrane. The chain crosses the membrane as a helical span at residues 88-108 (PVVVIGGLLCCTGMILASFST). At 109-116 (SMIQLYLT) the chain is on the extracellular side. A helical transmembrane segment spans residues 117–137 (IGFISGLGLAFNLQPALTILG). Topologically, residues 138 to 144 (KYFYRRR) are cytoplasmic. A helical membrane pass occupies residues 145–165 (PLASGLAMTGSPVFLSSLAPF). Topologically, residues 166–174 (NQYLFNSYG) are extracellular. Residues 175-195 (LKGSFLILGGIFLHSCVAGSL) form a helical membrane-spanning segment. Topologically, residues 196–245 (MRPVGTSQQSPKSKSKVSSRHDSSTKKAPKLTLAQRINMFLDFSLFKHRG) are cytoplasmic. Residues 198 to 223 (PVGTSQQSPKSKSKVSSRHDSSTKKA) form a disordered region. A helical transmembrane segment spans residues 246 to 266 (FLIYLSGNVIMFLGFFAPVIF). Residues 267-281 (LSPYAKNRGVDDYKA) are Extracellular-facing. A helical transmembrane segment spans residues 282–302 (AYLLSVMAFVDMFSRPCGGLI). Over 303–311 (ANTRLVRPR) the chain is Cytoplasmic. The helical transmembrane segment at 312 to 332 (IQYFFSLAIVFTGVCHLLCPL) threads the bilayer. Residues 333–337 (AESYT) are Extracellular-facing. The helical transmembrane segment at 338-358 (ALVVYAIFFGYGFGSVSSILF) threads the bilayer. Residues 359–372 (ETLMDLVGPARFSS) lie on the Cytoplasmic side of the membrane. The helical transmembrane segment at 373-393 (AVGLVTIVECCPVLLGPPLAG) threads the bilayer. Over 394 to 405 (KLVDETGEHKYL) the chain is Extracellular. Residues 406 to 426 (FVASGAIVVLAGIWLFIGNAI) traverse the membrane as a helical segment. Residues 427-484 (NYRLLAKERKREKARKKKSPNRHSKELESLSKSNQDDVAVRVPQAHRSPSDKERESNI) lie on the Cytoplasmic side of the membrane. The interval 437–484 (REKARKKKSPNRHSKELESLSKSNQDDVAVRVPQAHRSPSDKERESNI) is disordered. Basic residues predominate over residues 438 to 448 (EKARKKKSPNR). Composition is skewed to basic and acidic residues over residues 449-465 (HSKE…DDVA) and 474-484 (SPSDKERESNI).

This sequence belongs to the major facilitator superfamily. Monocarboxylate porter (TC 2.A.1.13) family. In terms of assembly, homodimer. Interacts with GRID2IP. Interacts with EMB; interaction mediates SLC16A7 targeting to the plasma membrane. Interacts with isoform 2 of BSG.

It localises to the cell membrane. Its subcellular location is the basolateral cell membrane. The protein localises to the cytoplasm. It carries out the reaction 3-methyl-2-oxobutanoate(out) + H(+)(out) = 3-methyl-2-oxobutanoate(in) + H(+)(in). The enzyme catalyses (S)-lactate(in) + H(+)(in) = (S)-lactate(out) + H(+)(out). It catalyses the reaction acetoacetate(out) + H(+)(out) = acetoacetate(in) + H(+)(in). The catalysed reaction is (R)-3-hydroxybutanoate(out) + H(+)(out) = (R)-3-hydroxybutanoate(in) + H(+)(in). It carries out the reaction 4-methyl-2-oxopentanoate(out) + H(+)(out) = 4-methyl-2-oxopentanoate(in) + H(+)(in). The enzyme catalyses pyruvate(out) + H(+)(out) = pyruvate(in) + H(+)(in). It catalyses the reaction (S)-3-hydroxybutanoate(out) + H(+)(out) = (S)-3-hydroxybutanoate(in) + H(+)(in). Its activity is regulated as follows. Transport activity exhibits steep dependence on substrate concentration. Substrate concentration sensitivity of SLC16A7 arises from the strong inter-subunit cooperativity of the SLC16A7 dimer during transport. Inhibited by AR-C155858. In terms of biological role, proton-coupled monocarboxylate symporter. Catalyzes the rapid transport across the plasma membrane of monocarboxylates such as L-lactate, pyruvate and ketone bodies, acetoacetate, beta-hydroxybutyrate and acetate. Dimerization is functionally required and both subunits work cooperatively in transporting substrate. The protein is Monocarboxylate transporter 2 (SLC16A7) of Meriones unguiculatus (Mongolian jird).